The chain runs to 58 residues: Metallothionein-1 (58 aa).

The beta stretch occupies residues 1–28 (PGPCCNDKCVCKEGGCKEGCQCTSCRCS). Residues cysteine 4, cysteine 5, cysteine 9, cysteine 11, cysteine 16, cysteine 20, cysteine 22, cysteine 25, cysteine 27, cysteine 30, cysteine 33, cysteine 37, cysteine 39, cysteine 45, cysteine 49, cysteine 53, cysteine 55, and cysteine 56 each contribute to the a divalent metal cation site. Residues 29–58 (PCEKCSSGCKCANKEECSKTCSKACSCCPT) form an alpha region.

It belongs to the metallothionein superfamily. Type 3 family.

Its function is as follows. Metallothioneins have a high content of cysteine residues that bind various heavy metals. Class I MTS in marine crustacea are involved in the sequestration of elevated levels of heavy-metal ions. In Scylla serrata (Mud crab), this protein is Metallothionein-1.